The chain runs to 226 residues: Oxaloacetate tautomerase FAHD2, mitochondrial (226 aa).

The transit peptide at 1–30 directs the protein to the mitochondrion; it reads MAAAAQRLLAASTKIVGVGRNFVAHAKELG. Residues Glu-69, Glu-71, and Asp-100 each coordinate Mg(2+).

This sequence belongs to the FAH family. Mg(2+) serves as cofactor. Mn(2+) is required as a cofactor.

It localises to the mitochondrion. The enzyme catalyses oxaloacetate = enol-oxaloacetate. In terms of biological role, tautomerase that converts enol-oxaloacetate, a strong inhibitor of succinate dehydrogenase, to the physiological keto form of oxaloacetate. This chain is Oxaloacetate tautomerase FAHD2, mitochondrial, found in Oryza sativa subsp. japonica (Rice).